Reading from the N-terminus, the 24-residue chain is Brevinin-1HSa (24 aa).

C18 and C24 are disulfide-bonded.

As to expression, expressed by the skin glands.

It is found in the secreted. Its function is as follows. Has antibacterial activity against the Gram-positive bacterium S.aureus ATCC 25923 (MIC=3 uM) and the Gram-negative bacterium E.coli ATCC 25726 (MIC=24 uM). This is Brevinin-1HSa from Odorrana hosii (Hose's rock frog).